Reading from the N-terminus, the 303-residue chain is Peroxisomal trans-2-enoyl-CoA reductase (303 aa).

23–47 is an NADP(+) binding site; that stretch reads VTGGATGIGKAIVKELLELGSNVVI. The residue at position 32 (K32) is an N6-succinyllysine. S49 bears the Phosphoserine mark. Y179 functions as the Proton acceptor in the catalytic mechanism. At Y179 the chain carries Phosphotyrosine. The Microbody targeting signal motif lies at 301-303; that stretch reads AKL.

The protein belongs to the short-chain dehydrogenases/reductases (SDR) family. Interacts with PEX5, probably required to target it into peroxisomes.

The protein resides in the peroxisome. It catalyses the reaction a (2E)-enoyl-CoA + NADPH + H(+) = a 2,3-saturated acyl-CoA + NADP(+). It carries out the reaction (2E)-decenoyl-CoA + NADPH + H(+) = decanoyl-CoA + NADP(+). The enzyme catalyses (2E)-hexenoyl-CoA + NADPH + H(+) = hexanoyl-CoA + NADP(+). The catalysed reaction is (2E)-octenoyl-CoA + NADPH + H(+) = octanoyl-CoA + NADP(+). It catalyses the reaction (2E)-dodecenoyl-CoA + NADPH + H(+) = dodecanoyl-CoA + NADP(+). It carries out the reaction (2E)-tetradecenoyl-CoA + NADPH + H(+) = tetradecanoyl-CoA + NADP(+). It participates in lipid metabolism; fatty acid biosynthesis. Participates in chain elongation of fatty acids. Catalyzes the reduction of trans-2-enoyl-CoAs of varying chain lengths from 6:1 to 16:1, having maximum activity with 10:1 CoA. Has no 2,4-dienoyl-CoA reductase activity. The sequence is that of Peroxisomal trans-2-enoyl-CoA reductase from Homo sapiens (Human).